We begin with the raw amino-acid sequence, 977 residues long: Aspartate, glycine, lysine and serine-rich protein (977 aa).

Residues Gly-23–Ser-116 are disordered. Basic and acidic residues predominate over residues Glu-37–Pro-50. Over residues Glu-51–Asn-63 the composition is skewed to polar residues. Asn-136 carries an N-linked (GlcNAc...) asparagine glycan. 2 disordered regions span residues Ala-246 to Gly-767 and Gly-780 to Leu-922. The span at Tyr-251–Ser-278 shows a compositional bias: low complexity. The segment covering Asn-309–Thr-325 has biased composition (polar residues). Positions Leu-410–Asp-427 are enriched in acidic residues. A compositionally biased stretch (gly residues) spans Gly-428–Gly-443. Composition is skewed to basic residues over residues Thr-447 to Lys-457 and Lys-465 to Lys-540. A compositionally biased stretch (basic and acidic residues) spans Gln-541–Ser-557. Residues Lys-572 to Gly-583 are compositionally biased toward low complexity. Over residues Asp-591–Asp-643 the composition is skewed to gly residues. The span at Glu-660–Cys-675 shows a compositional bias: basic and acidic residues. The segment covering Ser-700–Ser-724 has biased composition (low complexity). 3 stretches are compositionally biased toward polar residues: residues Ile-730–Gly-744, Ser-758–Gly-767, and Ser-785–Ala-801. Low complexity-rich tracts occupy residues Gly-803 to Gly-814, Gly-822 to Gly-857, and Lys-870 to Pro-907.

In terms of tissue distribution, component of the acid-insoluble and acid-soluble organic matrix of calcified layers of the shell (at protein level).

The protein localises to the secreted. This is Aspartate, glycine, lysine and serine-rich protein from Lottia gigantea (Giant owl limpet).